The primary structure comprises 409 residues: Argininosuccinate synthase (409 aa).

ATP is bound by residues 12–20 (AYSGGLDTS) and Ala-39. L-citrulline is bound by residues Tyr-90 and Ser-95. Gly-120 contributes to the ATP binding site. L-aspartate-binding residues include Thr-122, Asn-126, and Asp-127. Asn-126 provides a ligand contact to L-citrulline. Positions 130, 181, 190, 266, and 278 each coordinate L-citrulline.

This sequence belongs to the argininosuccinate synthase family. Type 1 subfamily. As to quaternary structure, homotetramer.

Its subcellular location is the cytoplasm. It carries out the reaction L-citrulline + L-aspartate + ATP = 2-(N(omega)-L-arginino)succinate + AMP + diphosphate + H(+). Its pathway is amino-acid biosynthesis; L-arginine biosynthesis; L-arginine from L-ornithine and carbamoyl phosphate: step 2/3. This is Argininosuccinate synthase from Acidiphilium cryptum (strain JF-5).